The following is a 415-amino-acid chain: Glucose-1-phosphate adenylyltransferase (415 aa).

Alpha-D-glucose 1-phosphate contacts are provided by residues Tyr100, Gly165, 182-183, and Ser200; that span reads EK.

The protein belongs to the bacterial/plant glucose-1-phosphate adenylyltransferase family. As to quaternary structure, homotetramer.

It carries out the reaction alpha-D-glucose 1-phosphate + ATP + H(+) = ADP-alpha-D-glucose + diphosphate. Its pathway is glycan biosynthesis; glycogen biosynthesis. Its function is as follows. Involved in the biosynthesis of ADP-glucose, a building block required for the elongation reactions to produce glycogen. Catalyzes the reaction between ATP and alpha-D-glucose 1-phosphate (G1P) to produce pyrophosphate and ADP-Glc. This is Glucose-1-phosphate adenylyltransferase from Bifidobacterium animalis subsp. lactis (strain AD011).